The following is a 602-amino-acid chain: RecBCD enzyme subunit RecD (602 aa).

Residue 171–178 (GGPGTGKT) coordinates ATP.

Belongs to the RecD family. In terms of assembly, heterotrimer of RecB, RecC and RecD. All subunits contribute to DNA-binding.

It catalyses the reaction Couples ATP hydrolysis with the unwinding of duplex DNA at the replication fork by translocating in the 5'-3' direction. This creates two antiparallel DNA single strands (ssDNA). The leading ssDNA polymer is the template for DNA polymerase III holoenzyme which synthesizes a continuous strand.. The enzyme catalyses ATP + H2O = ADP + phosphate + H(+). A helicase/nuclease that prepares dsDNA breaks (DSB) for recombinational DNA repair. Binds to DSBs and unwinds DNA via a highly rapid and processive ATP-dependent bidirectional helicase activity. Unwinds dsDNA until it encounters a Chi (crossover hotspot instigator) sequence from the 3' direction. Cuts ssDNA a few nucleotides 3' to the Chi site. The properties and activities of the enzyme are changed at Chi. The Chi-altered holoenzyme produces a long 3'-ssDNA overhang and facilitates RecA-binding to the ssDNA for homologous DNA recombination and repair. Holoenzyme degrades any linearized DNA that is unable to undergo homologous recombination. In the holoenzyme this subunit has ssDNA-dependent ATPase and 5'-3' helicase activity. When added to pre-assembled RecBC greatly stimulates nuclease activity and augments holoenzyme processivity. Negatively regulates the RecA-loading ability of RecBCD. In Buchnera aphidicola subsp. Acyrthosiphon pisum (strain APS) (Acyrthosiphon pisum symbiotic bacterium), this protein is RecBCD enzyme subunit RecD.